Here is a 417-residue protein sequence, read N- to C-terminus: MPYYWGAILIGGVFLAGCTQNQETTTTQSGSKENVIKVGLLVDLSGGLATYGNNEKHICEIAEEKINKYFEEKGMPYKVKLYVEDTRADPNICLQKVQALHAQGITFFLGPMASGEVKNIKGFINSNKIVIISPSSTAPPQMLGFRTPEEKKYVFRFVPTDNFQGNAIGDVAKQLGLKNVIVIYRKDAWGDGLERATVEKLKANGINIIDEIPYDPNIGDWSPIIQTTTNKIAGKGNDTGVIFIGYEEVATLLSQIDDNSPLLKHVWIGCDGTANSKKVLEEAKNKAVKVKLYSTMFQSETDEAEKIKEEFKKRGYGEPDQYALNVYDAFWVGAISYAEMLNKTGGKYDADLLSKLIKENTVKYSEGQFGVKSVTGYIKLNEWNDRASGNYGIFAVTEDGWKLVGVWDSTTGKINWK.

The signal sequence occupies residues 1–21 (MPYYWGAILIGGVFLAGCTQN).

This is an uncharacterized protein from Methanocaldococcus jannaschii (strain ATCC 43067 / DSM 2661 / JAL-1 / JCM 10045 / NBRC 100440) (Methanococcus jannaschii).